A 210-amino-acid chain; its full sequence is Uracil phosphoribosyltransferase (210 aa).

5-phospho-alpha-D-ribose 1-diphosphate contacts are provided by residues Arg78, Arg103, and 130-138 (DPMLATGGT). Uracil contacts are provided by residues Ile193 and 198–200 (GDA). A 5-phospho-alpha-D-ribose 1-diphosphate-binding site is contributed by Asp199.

This sequence belongs to the UPRTase family. The cofactor is Mg(2+).

It catalyses the reaction UMP + diphosphate = 5-phospho-alpha-D-ribose 1-diphosphate + uracil. Its pathway is pyrimidine metabolism; UMP biosynthesis via salvage pathway; UMP from uracil: step 1/1. Its activity is regulated as follows. Allosterically activated by GTP. In terms of biological role, catalyzes the conversion of uracil and 5-phospho-alpha-D-ribose 1-diphosphate (PRPP) to UMP and diphosphate. The sequence is that of Uracil phosphoribosyltransferase from Xanthomonas campestris pv. campestris (strain 8004).